The primary structure comprises 249 residues: Triosephosphate isomerase (249 aa).

A substrate-binding site is contributed by 8–10 (NWK). The active-site Electrophile is the His-95. Glu-163 (proton acceptor) is an active-site residue. Gly-169 and Ser-209 together coordinate substrate.

Belongs to the triosephosphate isomerase family. As to quaternary structure, homodimer.

The protein localises to the cytoplasm. It carries out the reaction D-glyceraldehyde 3-phosphate = dihydroxyacetone phosphate. It functions in the pathway carbohydrate biosynthesis; gluconeogenesis. It participates in carbohydrate degradation; glycolysis; D-glyceraldehyde 3-phosphate from glycerone phosphate: step 1/1. Functionally, involved in the gluconeogenesis. Catalyzes stereospecifically the conversion of dihydroxyacetone phosphate (DHAP) to D-glyceraldehyde-3-phosphate (G3P). The protein is Triosephosphate isomerase of Orientia tsutsugamushi (strain Ikeda) (Rickettsia tsutsugamushi).